The sequence spans 591 residues: Aspartate--tRNA ligase (591 aa).

Position 173 (Glu173) interacts with L-aspartate. The aspartate stretch occupies residues 197-200 (QLFK). Arg219 provides a ligand contact to L-aspartate. ATP contacts are provided by residues 219–221 (RDE) and Gln228. His448 contacts L-aspartate. Residue Glu482 participates in ATP binding. Arg489 contacts L-aspartate. 534 to 537 (GLDR) contacts ATP.

The protein belongs to the class-II aminoacyl-tRNA synthetase family. Type 1 subfamily. In terms of assembly, homodimer.

The protein localises to the cytoplasm. It catalyses the reaction tRNA(Asp) + L-aspartate + ATP = L-aspartyl-tRNA(Asp) + AMP + diphosphate. Catalyzes the attachment of L-aspartate to tRNA(Asp) in a two-step reaction: L-aspartate is first activated by ATP to form Asp-AMP and then transferred to the acceptor end of tRNA(Asp). The sequence is that of Aspartate--tRNA ligase from Shewanella sp. (strain ANA-3).